We begin with the raw amino-acid sequence, 469 residues long: 3-isopropylmalate dehydratase large subunit (469 aa).

[4Fe-4S] cluster-binding residues include Cys349, Cys410, and Cys413.

This sequence belongs to the aconitase/IPM isomerase family. LeuC type 1 subfamily. In terms of assembly, heterodimer of LeuC and LeuD. [4Fe-4S] cluster is required as a cofactor.

The enzyme catalyses (2R,3S)-3-isopropylmalate = (2S)-2-isopropylmalate. It functions in the pathway amino-acid biosynthesis; L-leucine biosynthesis; L-leucine from 3-methyl-2-oxobutanoate: step 2/4. In terms of biological role, catalyzes the isomerization between 2-isopropylmalate and 3-isopropylmalate, via the formation of 2-isopropylmaleate. This Aromatoleum aromaticum (strain DSM 19018 / LMG 30748 / EbN1) (Azoarcus sp. (strain EbN1)) protein is 3-isopropylmalate dehydratase large subunit.